The sequence spans 416 residues: UDP-N-acetylglucosamine 1-carboxyvinyltransferase (416 aa).

22 to 23 (KN) serves as a coordination point for phosphoenolpyruvate. Arginine 92 serves as a coordination point for UDP-N-acetyl-alpha-D-glucosamine. Cysteine 116 (proton donor) is an active-site residue. Cysteine 116 bears the 2-(S-cysteinyl)pyruvic acid O-phosphothioketal mark. 2 residues coordinate UDP-N-acetyl-alpha-D-glucosamine: aspartate 304 and isoleucine 326.

The protein belongs to the EPSP synthase family. MurA subfamily.

It is found in the cytoplasm. The enzyme catalyses phosphoenolpyruvate + UDP-N-acetyl-alpha-D-glucosamine = UDP-N-acetyl-3-O-(1-carboxyvinyl)-alpha-D-glucosamine + phosphate. It functions in the pathway cell wall biogenesis; peptidoglycan biosynthesis. Cell wall formation. Adds enolpyruvyl to UDP-N-acetylglucosamine. In Solidesulfovibrio magneticus (strain ATCC 700980 / DSM 13731 / RS-1) (Desulfovibrio magneticus), this protein is UDP-N-acetylglucosamine 1-carboxyvinyltransferase.